The following is a 181-amino-acid chain: MRKRGEIEKKARLQKFMQTTSDLTNLVKMAGLEAYSISHKLKDLEKGIENYEDNNNSTKDTLNQSLKDVIYEITKLSSLIEAKDKIDQRKKLGYQTEQEFDAKFINLKNIKDKLKTLCGKAKGHLGSNLSSVTIDGITKEKVAQAYLIIKLIHKTLIYMNDDSKGSLATILNDLEKDAKSI.

This is an uncharacterized protein from Borreliella burgdorferi (strain ATCC 35210 / DSM 4680 / CIP 102532 / B31) (Borrelia burgdorferi).